A 188-amino-acid polypeptide reads, in one-letter code: Actin-related protein 2/3 complex subunit 3 (188 aa).

The protein belongs to the ARPC3 family. As to quaternary structure, component of the Arp2/3 complex.

The protein localises to the cytoplasm. Its subcellular location is the cytoskeleton. Functions as a component of the Arp2/3 complex which is involved in regulation of actin polymerization and together with an activating nucleation-promoting factor (NPF) mediates the formation of branched actin networks. This is Actin-related protein 2/3 complex subunit 3 from Entamoeba histolytica (strain ATCC 30459 / HM-1:IMSS / ABRM).